Consider the following 95-residue polypeptide: Defensin-1 (95 aa).

The signal sequence occupies residues 1 to 19; the sequence is MKIYFIVGLLFMAMVAIMA. A propeptide spanning residues 20 to 43 is cleaved from the precursor; that stretch reads APVEDEFEPLEHFENEERADRHRR. Intrachain disulfides connect Cys-46–Cys-74, Cys-60–Cys-79, and Cys-64–Cys-81. Phe-94 is subject to Phenylalanine amide.

It localises to the secreted. Functionally, found in royal jelly and in hemolymph, potent antibacterial protein against Gram-positive bacteria at low concentration. This chain is Defensin-1, found in Apis mellifera carnica (Carniolan honeybee).